The sequence spans 361 residues: Ribosomal RNA large subunit methyltransferase M (361 aa).

S-adenosyl-L-methionine is bound by residues Ser-186, 219 to 222 (CPGG), Asp-238, Asp-258, and Asp-275. The active-site Proton acceptor is Lys-304.

Belongs to the class I-like SAM-binding methyltransferase superfamily. RNA methyltransferase RlmE family. RlmM subfamily. Monomer.

Its subcellular location is the cytoplasm. It catalyses the reaction cytidine(2498) in 23S rRNA + S-adenosyl-L-methionine = 2'-O-methylcytidine(2498) in 23S rRNA + S-adenosyl-L-homocysteine + H(+). In terms of biological role, catalyzes the 2'-O-methylation at nucleotide C2498 in 23S rRNA. This is Ribosomal RNA large subunit methyltransferase M from Pseudoalteromonas translucida (strain TAC 125).